The primary structure comprises 371 residues: Peptide chain release factor 2 (371 aa).

At Gln253 the chain carries N5-methylglutamine.

The protein belongs to the prokaryotic/mitochondrial release factor family. Methylated by PrmC. Methylation increases the termination efficiency of RF2.

The protein localises to the cytoplasm. Its function is as follows. Peptide chain release factor 2 directs the termination of translation in response to the peptide chain termination codons UGA and UAA. The polypeptide is Peptide chain release factor 2 (prfB) (Mycobacterium bovis (strain ATCC BAA-935 / AF2122/97)).